A 313-amino-acid polypeptide reads, in one-letter code: Cyclin-dependent kinase B2-1 (313 aa).

At Met1 the chain carries N-acetylmethionine. Positions 14–304 (FEKLEKVGEG…AKMAMEHPYF (291 aa)) constitute a Protein kinase domain. Residues 20-28 (VGEGTYGKV) and Lys43 each bind ATP. Phosphotyrosine is present on Tyr25. The active-site Proton acceptor is Asp145. At Thr179 the chain carries Phosphothreonine.

It belongs to the protein kinase superfamily. CMGC Ser/Thr protein kinase family. CDC2/CDKX subfamily. In terms of assembly, interacts with CYCD4-1 and CKS1. Expressed in root tips, shoot apical meristem, leaf primordia vascular tissues and tapetum of anthers.

The catalysed reaction is L-seryl-[protein] + ATP = O-phospho-L-seryl-[protein] + ADP + H(+). It catalyses the reaction L-threonyl-[protein] + ATP = O-phospho-L-threonyl-[protein] + ADP + H(+). The enzyme catalyses [DNA-directed RNA polymerase] + ATP = phospho-[DNA-directed RNA polymerase] + ADP + H(+). This is Cyclin-dependent kinase B2-1 (CDKB2-1) from Arabidopsis thaliana (Mouse-ear cress).